Consider the following 463-residue polypeptide: Hydroxyacid-oxoacid transhydrogenase, mitochondrial (463 aa).

It belongs to the iron-containing alcohol dehydrogenase family. Hydroxyacid-oxoacid transhydrogenase subfamily.

The protein resides in the mitochondrion. It carries out the reaction (S)-3-hydroxybutanoate + 2-oxoglutarate = (R)-2-hydroxyglutarate + acetoacetate. The catalysed reaction is 4-hydroxybutanoate + 2-oxoglutarate = (R)-2-hydroxyglutarate + succinate semialdehyde. In terms of biological role, catalyzes the cofactor-independent reversible oxidation of gamma-hydroxybutyrate (GHB) to succinic semialdehyde (SSA) coupled to reduction of 2-ketoglutarate (2-KG) to D-2-hydroxyglutarate (D-2-HG). L-3-hydroxybutyrate (L-3-OHB) is also a substrate for HOT when using 2-KG as hydrogen acceptor, resulting in the formation of D-2-HG. This chain is Hydroxyacid-oxoacid transhydrogenase, mitochondrial (adhfe1), found in Xenopus tropicalis (Western clawed frog).